A 497-amino-acid polypeptide reads, in one-letter code: Amino acid oxidase fsqB (497 aa).

FAD-binding residues include V14, F15, D38, N53, A57, N58, R63, V64, and V211. Position 414 is an S-8alpha-FAD cysteine (C414). FAD is bound by residues F447 and K448.

Belongs to the MSOX/MTOX family. Dimer. Requires FAD as cofactor.

It catalyses the reaction (2S,4S,5S)-2-amino-6-(3,4-dihydroxyphenyl)-4-hydroxy-5-(methylamino)hexanoyl-[peptidyl-carrier protein] + O2 = (2S,4S)-2-amino-4-[(3S)-7,8-dihydroxy-1,2,3,4-tetrahydroisoquinolin-3-yl]-4-hydroxybutanoyl-[peptidyl-carrier protein] + H2O2. The enzyme catalyses N-methyl-L-dopa + O2 = (3S)-7,8-dihydroxy-1,2,3,4-tetrahydroisoquinoline-3-carboxylate + H2O2. The catalysed reaction is N-methyl-D-dopa + O2 = (3R)-7,8-dihydroxy-1,2,3,4-tetrahydroisoquinoline-3-carboxylate + H2O2. It participates in secondary metabolite biosynthesis. Functionally, amino acid oxidase; part of the gene cluster that mediates the biosynthesis of the isoquinoline alkaloids fumisoquin A, fumisoquin B and fumisoquin C; as well as small amounts of fumipyrrole as a shunt metabolite. The products of the cluster lead to a brown coloration and are important for growth and conidiation. The nonribosomal peptide synthetase-like protein fsqF, which lacks a canonical condensation domain, is required for addition of a serine-derived dehydroalanine moiety to activated tyrosine but is not essential for the subsequent steps leading to isoquinoline formation. A different enzyme, most likely the ATP-grasp enzyme fsqD, is responsible for activation of tyrosine. Three additional enzymes encoded by the fsq cluster, the N-methyltransferase fsqC, the phenol 2-monooxygenase fsqG and the FAD-dependent oxidase fsqB, catalyze the formation of the isoquinoline ring system in the fumisoquins. FsqB converts the fspF thiolation domain-bound (2S,4S,5S)-2-amino-6-(3,4-dihydroxyphenyl)-4-hydroxy-5-(methylamino)hexanoyl into isoquinoline. The cyclization most likely proceeds via a two-step mechanism, beginning with FAD-dependent oxidation of the methyl group to an iminium species followed by electrophilic attack on the deprotonated phenol. In terms of biological role, is able to convert N-methyl-3,4-dihydroxy-DL-phenylalanine (N-methyl-DOPA) directly into cyclic isoquinoline, in vitro. The absence of the meta-hydroxyl group, as in L-N-methyl-tyrosine, leads to a 25-fold lower rate of reduction and the formation of the demethylated product L-tyrosine, instead of a cyclic product. Does not accept the D-stereoisomer of N-methyltyrosine, in contrast to N-methyl-DOPA, for which both stereoisomers are oxidized with similar rates. In Aspergillus fumigatus (strain ATCC MYA-4609 / CBS 101355 / FGSC A1100 / Af293) (Neosartorya fumigata), this protein is Amino acid oxidase fsqB.